We begin with the raw amino-acid sequence, 70 residues long: DNA-directed RNA polymerase subunit epsilon (70 aa).

This sequence belongs to the RNA polymerase subunit epsilon family. In terms of assembly, RNAP is composed of a core of 2 alpha, a beta and a beta' subunit. The core is associated with a delta subunit, and at least one of epsilon or omega. When a sigma factor is associated with the core the holoenzyme is formed, which can initiate transcription.

The catalysed reaction is RNA(n) + a ribonucleoside 5'-triphosphate = RNA(n+1) + diphosphate. Its function is as follows. A non-essential component of RNA polymerase (RNAP). The protein is DNA-directed RNA polymerase subunit epsilon of Bacillus mycoides (strain KBAB4) (Bacillus weihenstephanensis).